Consider the following 1098-residue polypeptide: Probable arabinosyltransferase B (1098 aa).

A run of 12 helical transmembrane segments spans residues 28–50 (WVAT…LPVV), 217–239 (LKLL…LWRL), 271–293 (ASWR…WHVI), 402–419 (LRPE…YVLI), 434–456 (AVVT…AALV), 472–494 (LVGT…TVVF), 541–558 (FGFL…FIML), 570–587 (PAWR…FLMF), 597–619 (GLFA…PSVL), 626–648 (MAFL…GWWY), 663–685 (IDGI…YAAW), and 698–720 (LIRA…VFVA).

Belongs to the emb family.

The protein resides in the cell membrane. In terms of biological role, arabinosyl transferase responsible for the polymerization of arabinose into the arabinan of arabinogalactan. This chain is Probable arabinosyltransferase B (embB), found in Mycobacterium tuberculosis (strain CDC 1551 / Oshkosh).